We begin with the raw amino-acid sequence, 235 residues long: Putative homeobox-leucine zipper protein ATHB-51 (235 aa).

Positions 74–133 (EMIKKKRLTSGQLASLERSFQEEIKLDSDRKVKLSRELGLQPRQIAVWFQNRRARWKAKQ) form a DNA-binding region, homeobox. Residues 134–162 (LEQLYDSLRQEYDVVSREKQMLHDEVKKL) form a leucine-zipper region.

This sequence belongs to the HD-ZIP homeobox family. Class I subfamily. As to expression, widely expressed.

The protein resides in the nucleus. Functionally, putative transcription factor. The polypeptide is Putative homeobox-leucine zipper protein ATHB-51 (ATHB-51) (Arabidopsis thaliana (Mouse-ear cress)).